A 158-amino-acid chain; its full sequence is Snaclec convulxin subunit alpha (158 aa).

The first 23 residues, 1-23, serve as a signal peptide directing secretion; the sequence is MGRFIFVSFGLLVLFLSLSGTGA. Intrachain disulfides connect Cys27–Cys38, Cys55–Cys152, and Cys127–Cys144. Residues 34 to 158 form the C-type lectin domain; it reads YDQHCYRIFN…PFVCKFPPQC (125 aa).

It belongs to the snaclec family. Tetramer of heterodimers of alpha and beta subunits (alphabeta)(4); disulfide-linked. In terms of tissue distribution, expressed by the venom gland.

Its subcellular location is the secreted. Functionally, snake venom lectin that activates platelets by binding to the platelet collagen receptor glycoprotein VI (GP6). The indirect activation of integrin alpha-IIb/beta-3 (ITGA2B/ITGB3) also induced by the toxin is upstream the cytoskeletal translocation of GPIb, FcRgamma (FCER1G) and 14-3-3zeta (YWHAZ). The protein is Snaclec convulxin subunit alpha of Crotalus durissus terrificus (South American rattlesnake).